We begin with the raw amino-acid sequence, 317 residues long: Aspartate carbamoyltransferase catalytic subunit (317 aa).

Residues arginine 65 and threonine 66 each contribute to the carbamoyl phosphate site. Lysine 93 is a binding site for L-aspartate. Carbamoyl phosphate contacts are provided by arginine 115, histidine 145, and glutamine 148. 2 residues coordinate L-aspartate: arginine 178 and arginine 233. 2 residues coordinate carbamoyl phosphate: glycine 274 and proline 275.

This sequence belongs to the aspartate/ornithine carbamoyltransferase superfamily. ATCase family. Heterododecamer (2C3:3R2) of six catalytic PyrB chains organized as two trimers (C3), and six regulatory PyrI chains organized as three dimers (R2).

It carries out the reaction carbamoyl phosphate + L-aspartate = N-carbamoyl-L-aspartate + phosphate + H(+). It functions in the pathway pyrimidine metabolism; UMP biosynthesis via de novo pathway; (S)-dihydroorotate from bicarbonate: step 2/3. Its function is as follows. Catalyzes the condensation of carbamoyl phosphate and aspartate to form carbamoyl aspartate and inorganic phosphate, the committed step in the de novo pyrimidine nucleotide biosynthesis pathway. In Bordetella parapertussis (strain 12822 / ATCC BAA-587 / NCTC 13253), this protein is Aspartate carbamoyltransferase catalytic subunit.